Reading from the N-terminus, the 410-residue chain is Peptidase T (410 aa).

Histidine 78 is a binding site for Zn(2+). The active site involves aspartate 80. A Zn(2+)-binding site is contributed by aspartate 140. Glutamate 173 acts as the Proton acceptor in catalysis. The Zn(2+) site is built by glutamate 174, aspartate 196, and histidine 379.

It belongs to the peptidase M20B family. Zn(2+) serves as cofactor.

The protein localises to the cytoplasm. It carries out the reaction Release of the N-terminal residue from a tripeptide.. Functionally, cleaves the N-terminal amino acid of tripeptides. In Pectobacterium carotovorum subsp. carotovorum (strain PC1), this protein is Peptidase T.